We begin with the raw amino-acid sequence, 329 residues long: Ribosomal protein L11 methyltransferase (329 aa).

T177, G198, D220, and N264 together coordinate S-adenosyl-L-methionine.

It belongs to the methyltransferase superfamily. PrmA family.

The protein resides in the cytoplasm. It carries out the reaction L-lysyl-[protein] + 3 S-adenosyl-L-methionine = N(6),N(6),N(6)-trimethyl-L-lysyl-[protein] + 3 S-adenosyl-L-homocysteine + 3 H(+). Methylates ribosomal protein L11. The sequence is that of Ribosomal protein L11 methyltransferase from Helicobacter pylori (strain HPAG1).